The following is a 65-amino-acid chain: Large ribosomal subunit protein bL35 (65 aa).

Belongs to the bacterial ribosomal protein bL35 family.

This is Large ribosomal subunit protein bL35 from Magnetococcus marinus (strain ATCC BAA-1437 / JCM 17883 / MC-1).